Reading from the N-terminus, the 401-residue chain is MGRAEKVILAYSGGVDTSVCIPYLQHEWGVKEVITLAVDLGQGDELEPIRQKALDAGASASLVADAKAEFIRNYAFPAIQANALYENRYPLSTALARPLIAKLLVEAATQYGADAVAHGCTGKGNDQVRFDVAIAALNPNLKVLAPAREWGMSREETIAYGERFGIPAPVKKSSPYSIDRNLLGRSIEAGPLEDPWMEPLEEVYWMTQAIEHTPNSPEYVDIGFEAGVPVSLDGRPLDPVTLVSELNERVGRHGFGRIDMIENRLVGIKSREIYEAPGLLVLIDAHRDLESLTLTADVMHYKRGIEETYSRLVYNGLWYSPLKEALDAFIQQTQQRVTGTVRVKLFKGTARVVGRQSPYSLYTPDLATYGAEDQFDHRAAEGFIYVWGLPTRVWAEKLRQG.

10–18 (AYSGGVDTS) lines the ATP pocket. Tyr89 is an L-citrulline binding site. An ATP-binding site is contributed by Gly119. Residues Thr121, Asn125, and Asp126 each contribute to the L-aspartate site. Asn125 serves as a coordination point for L-citrulline. L-citrulline contacts are provided by Arg129, Ser177, Ser186, Glu262, and Tyr274.

Belongs to the argininosuccinate synthase family. Type 1 subfamily. In terms of assembly, homotetramer.

The protein resides in the cytoplasm. It catalyses the reaction L-citrulline + L-aspartate + ATP = 2-(N(omega)-L-arginino)succinate + AMP + diphosphate + H(+). Its pathway is amino-acid biosynthesis; L-arginine biosynthesis; L-arginine from L-ornithine and carbamoyl phosphate: step 2/3. In Thermosynechococcus vestitus (strain NIES-2133 / IAM M-273 / BP-1), this protein is Argininosuccinate synthase.